Consider the following 362-residue polypeptide: Peptide chain release factor 1 (362 aa).

Position 237 is an N5-methylglutamine (Gln237).

It belongs to the prokaryotic/mitochondrial release factor family. Methylated by PrmC. Methylation increases the termination efficiency of RF1.

It is found in the cytoplasm. Its function is as follows. Peptide chain release factor 1 directs the termination of translation in response to the peptide chain termination codons UAG and UAA. This chain is Peptide chain release factor 1, found in Vibrio vulnificus (strain CMCP6).